Consider the following 572-residue polypeptide: Pentatricopeptide repeat-containing protein At5g15010, mitochondrial (572 aa).

The N-terminal 57 residues, 1–57 (MRGIFLIRSRLSIFRAPAVKCLRFSNVLPSLSNNCIVRLYMEPPVACVLPLGLCSMF), are a transit peptide targeting the mitochondrion. PPR repeat units follow at residues 160 to 194 (SVREYHSMISILGKMRKFDTAWTLIDEMRKFSPSL), 196 to 230 (NSQTLLIMIRKYCAVHDVGKAINTFHAYKRFKLEM), 231 to 261 (GIDDFQSLLSALCRYKNVSDAGHLIFCNKDK), 265 to 300 (DAKSFNIVLNGWCNVIGSPREAERVWMEMGNVGVKH), 301 to 335 (DVVSYSSMISCYSKGGSLNKVLKLFDRMKKECIEP), 336 to 371 (DRKVYNAVVHALAKASFVSEARNLMKTMEEEKGIEP), 372 to 406 (NVVTYNSLIKPLCKARKTEEAKQVFDEMLEKGLFP), 412 to 438 (HAFMRILRTGEEVFELLAKMRKMGCEP), 439 to 473 (TVETYIMLIRKLCRWRDFDNVLLLWDEMKEKTVGP), and 474 to 508 (DLSSYIVMIHGLFLNGKIEEAYGYYKEMKDKGMRP).

This sequence belongs to the PPR family. P subfamily.

It is found in the mitochondrion. This is Pentatricopeptide repeat-containing protein At5g15010, mitochondrial from Arabidopsis thaliana (Mouse-ear cress).